A 223-amino-acid chain; its full sequence is Deoxyribose-phosphate aldolase (223 aa).

The active-site Proton donor/acceptor is the aspartate 91. The active-site Schiff-base intermediate with acetaldehyde is the lysine 153. Residue lysine 182 is the Proton donor/acceptor of the active site.

This sequence belongs to the DeoC/FbaB aldolase family. DeoC type 1 subfamily.

The protein resides in the cytoplasm. The enzyme catalyses 2-deoxy-D-ribose 5-phosphate = D-glyceraldehyde 3-phosphate + acetaldehyde. Its pathway is carbohydrate degradation; 2-deoxy-D-ribose 1-phosphate degradation; D-glyceraldehyde 3-phosphate and acetaldehyde from 2-deoxy-alpha-D-ribose 1-phosphate: step 2/2. Functionally, catalyzes a reversible aldol reaction between acetaldehyde and D-glyceraldehyde 3-phosphate to generate 2-deoxy-D-ribose 5-phosphate. The protein is Deoxyribose-phosphate aldolase of Streptococcus pyogenes serotype M3 (strain ATCC BAA-595 / MGAS315).